Here is a 204-residue protein sequence, read N- to C-terminus: Protein FAM167A (204 aa).

The tract at residues 58-80 (GLAVSDGSTELEKDAGLKPRATP) is disordered. The stretch at 113–146 (LRKELMEMRIQDQQLARQLMRLRGDINKLKVEQT) forms a coiled coil.

The protein belongs to the FAM167 (SEC) family.

This Danio rerio (Zebrafish) protein is Protein FAM167A (fam167a).